Here is a 584-residue protein sequence, read N- to C-terminus: Keratin, type I cytoskeletal 10 (584 aa).

Positions 1 to 15 (MSVRYSSSKHYSSSR) are enriched in low complexity. Positions 1–24 (MSVRYSSSKHYSSSRSGGGGGGGG) are disordered. Residues 1-145 (MSVRYSSSKH…GGDGGLLSGN (145 aa)) are head. A phosphoserine mark is found at Ser-14, Ser-16, Ser-42, Ser-53, Ser-56, and Ser-170. The interval 146 to 181 (EKVTMQNLNDRLASYLDKVRALEESNYELEGKIKEW) is coil 1A. In terms of domain architecture, IF rod spans 146-460 (EKVTMQNLND…SLLEGEGSSG (315 aa)). Residues 182 to 202 (YEKHGNSHQGEPRDYSKYYKT) are linker 1. A coil 1B region spans residues 203–294 (IDDLKNQILN…KNHEEEMKDL (92 aa)). A linker 12 region spans residues 295–317 (RNVSTGDVNVEMNAAPGVDLTQL). The segment at 318 to 456 (LNNMRSQYEQ…QTYRSLLEGE (139 aa)) is coil 2. The segment at 453–584 (LEGEGSSGGG…GESSSKGPRY (132 aa)) is disordered. The span at 457 to 563 (GSSGGGGRGG…GGGYGGGSSS (107 aa)) shows a compositional bias: gly residues. Positions 457–584 (GSSGGGGRGG…GESSSKGPRY (128 aa)) are tail. A compositionally biased stretch (low complexity) spans 564–584 (GGHKSSSSGSVGESSSKGPRY).

It belongs to the intermediate filament family. As to quaternary structure, heterotetramer of two type I and two type II keratins. Heterodimer with KRT1. Two heterodimers of KRT1 and KRT10 form a heterotetramer. The KRT10 subunit in the heterotetramer is probably disulfide-linked. Interacts with PLEC isoform 1C, when in a heterodimer with KRT1. In terms of assembly, (Microbial infection) Interacts (via C-terminal tail domain) with the S.aureus clumping factor, clfB; this interaction probably mediates S.aureus attachment to the keratinized squamous epithelial cells from the nasal cavity. (Microbial infection) Interacts (via the C-terminal tail domain) with S.pneumoniae serine-rich repeat protein PsrP; this interaction probably mediates S.pneumoniae adherence to lung tissue and subsequent pathogenesis. Neither protein has to be glycosylated for the interaction to occur. As to expression, seen in all suprabasal cell layers including stratum corneum. Expressed on the surface of lung cell lines. Localized on the surface of desquamated nasal epithelial cells (at protein level).

Its subcellular location is the secreted. It is found in the extracellular space. It localises to the cell surface. The protein resides in the cytoplasm. In terms of biological role, plays a role in the establishment of the epidermal barrier on plantar skin. Involved in the maintenance of cell layer development and keratin filament bundles in suprabasal cells of the epithelium. (Microbial infection) Acts as a mediator of S.aureus adherence to desquamated nasal epithelial cells via clfB, and hence may play a role in nasal colonization. Its function is as follows. (Microbial infection) Binds S.pneumoniae PsrP, mediating adherence of the bacteria to lung cell lines. Reduction of levels of KRT10 keratin decrease adherence, overexpression increases adherence. Neither protein has to be glycosylated for the interaction to occur. In Homo sapiens (Human), this protein is Keratin, type I cytoskeletal 10 (KRT10).